We begin with the raw amino-acid sequence, 758 residues long: Probable C-mannosyltransferase DPY19L2 (758 aa).

The tract at residues 1–58 is disordered; sequence MRKQGVSSKRLQSSGRSQSKGRRGASLAREPEVEEEMEKSALGGGKLPRGSWRSSPGR. At 1 to 107 the chain is on the nuclear side; sequence MRKQGVSSKR…ELQARRFSSR (107 aa). Residues 7-18 are compositionally biased toward low complexity; sequence SSKRLQSSGRSQ. Residues 108–128 form a helical membrane-spanning segment; that stretch reads TTLGIAVFVAILHWLHLVTLF. Residues 129 to 194 lie on the Perinuclear space side of the membrane; that stretch reads ENDRHFSHLS…INAIKRFHLY (66 aa). A helical membrane pass occupies residues 195–215; sequence PEVIIASWYCTFMGIMNLFGL. Topologically, residues 216-241 are nuclear; it reads ETKTCWNVTRIEPLNEVQSCEGLGDP. 2 helical membrane-spanning segments follow: residues 242–262 and 263–283; these read ACFY…LFFM and YGAY…CFFF. Topologically, residues 284-296 are nuclear; sequence NHGEATRVMWTPP. The helical transmembrane segment at 297–317 threads the bilayer; it reads LRESFSYPFLVLQMCILTLIL. Over 318–343 the chain is Perinuclear space; the sequence is RTSSNDRRPFIALCLSNVAFMLPWQF. A helical transmembrane segment spans residues 344-364; it reads AQFILFTQIASLFPMYVVGYI. Over 365-371 the chain is Nuclear; the sequence is EPSKFQK. A helical transmembrane segment spans residues 372–392; it reads IIYMNMISVTLSFILMFGNSM. The Perinuclear space portion of the chain corresponds to 393-422; it reads YLSSYYSSSLLMTWAIILKRNEIQKLGVSK. A helical transmembrane segment spans residues 423-443; sequence LNFWLIQGSAWWCGTIILKFL. Residues 444–488 lie on the Nuclear side of the membrane; it reads TSKILGVSDHIRLSDLIAARILRYTDFDTLIYTCAPEFDFMEKAT. A helical transmembrane segment spans residues 489-509; it reads PLRYTKTLLLPVVMVITCFIF. Residues 510 to 533 are Perinuclear space-facing; sequence KKTVRDISYVLATNIYLRKQLLEH. The chain crosses the membrane as a helical span at residues 534-554; it reads SELAFHTLQLLVFTALAILIM. The Nuclear segment spans residues 555-758; that stretch reads RLKMFLTPHM…NSVYRVLKVN (204 aa).

The protein belongs to the dpy-19 family. In terms of assembly, interacts with FAM209. Widely expressed with high expression in testis. Not detectable in ejaculated sperm (at protein level).

It localises to the nucleus inner membrane. In terms of biological role, probable C-mannosyltransferase that mediates C-mannosylation of tryptophan residues on target proteins. Its function is as follows. Required during spermatogenesis for sperm head elongation and acrosome formation. Also plays a role in acrosome attachment to the nuclear envelope. The polypeptide is Probable C-mannosyltransferase DPY19L2 (Homo sapiens (Human)).